We begin with the raw amino-acid sequence, 222 residues long: MSDISDANKLKHRFRGYFPVVIDVETAGFNSQTDALLEIAVTLLKMDDEGLLGIDKTLHFNIEPFEGANLEPEALAFNGIDPTNPLRGAVSEKEAFLEIFKAVKKAQKASDCHRSIIVAHNAAFDHGFVSKAIERCDLKRSPFHPFATFDTATLAGLAIGHTVLAKACIMAGIPFDNKEAHSALYDTERTAELFCYIVNRWKHLGGWPLLAAGESEDTDGEE.

The Exonuclease domain maps to 20-194 (VVIDVETAGF…YDTERTAELF (175 aa)). Positions 23, 25, 181, and 186 each coordinate Mg(2+). The Proton donor/acceptor role is filled by His181.

Belongs to the RNase T family. In terms of assembly, homodimer. The cofactor is Mg(2+).

Functionally, trims short 3' overhangs of a variety of RNA species, leaving a one or two nucleotide 3' overhang. Responsible for the end-turnover of tRNA: specifically removes the terminal AMP residue from uncharged tRNA (tRNA-C-C-A). Also appears to be involved in tRNA biosynthesis. This Shewanella sp. (strain MR-4) protein is Ribonuclease T.